We begin with the raw amino-acid sequence, 472 residues long: uncharacterized protein (472 aa).

The protein localises to the mitochondrion. This is an uncharacterized protein from Saccharomyces cerevisiae (strain ATCC 204508 / S288c) (Baker's yeast).